The primary structure comprises 114 residues: Gonadotropin subunit beta-1 (114 aa).

An N-terminal signal peptide occupies residues 1–19 (MQLVLMAAVLALAEVGCFG). Cystine bridges form between cysteine 20-cysteine 66, cysteine 32-cysteine 80, cysteine 37-cysteine 114, cysteine 43-cysteine 92, cysteine 47-cysteine 94, and cysteine 97-cysteine 104. Asparagine 24 carries N-linked (GlcNAc...) asparagine glycosylation.

This sequence belongs to the glycoprotein hormones subunit beta family. As to quaternary structure, heterodimer of an alpha and a beta chain.

The protein localises to the secreted. Its function is as follows. Involved in gametogenesis and steroidogenesis. The chain is Gonadotropin subunit beta-1 (cgba) from Fundulus heteroclitus (Killifish).